The following is a 372-amino-acid chain: DNA replication and repair protein RecF (372 aa).

An ATP-binding site is contributed by 30–37; the sequence is GENAQGKT.

Belongs to the RecF family.

The protein localises to the cytoplasm. In terms of biological role, the RecF protein is involved in DNA metabolism; it is required for DNA replication and normal SOS inducibility. RecF binds preferentially to single-stranded, linear DNA. It also seems to bind ATP. In Geobacillus kaustophilus (strain HTA426), this protein is DNA replication and repair protein RecF.